A 382-amino-acid polypeptide reads, in one-letter code: uncharacterized protein (382 aa).

11 helical membrane-spanning segments follow: residues 8 to 28, 45 to 65, 75 to 95, 102 to 122, 131 to 151, 157 to 177, 204 to 224, 231 to 251, 274 to 294, 325 to 345, and 349 to 369; these read VMLLLCGLLLLTLAIAVLNTL, MVSSSYFTGNLVGTLFTGYLI, YLASLIFAAGCVGLGGMVGFW, FIAGIGCAMIWVVVESALMCS, LLAAYMMAYYMGTFLGQLLVS, LLHVLPWVTGMILAGILPLLF, LGVNGCIISGIVLGSLYGLMP, GMANASIGFWMAVLVSAGILG, VVILGSIAMLTQAAMAPALFI, ALLLSYTVGSLLGPSFAAMLM, and SDNLLFIMIASVSFIYLLMLL.

Belongs to the major facilitator superfamily. YcaD (TC 2.A.1.26) family.

Its subcellular location is the cell inner membrane. This is an uncharacterized protein from Salmonella gallinarum (strain 287/91 / NCTC 13346).